We begin with the raw amino-acid sequence, 117 residues long: MEDDFLFMTLLYDFYGALLTDKQREIFEMYYLNDYSLGEISEILDISRQGVYDALKRAEDSLEFYEEKLGLVKKHQEMMKKIEKIKECIKLIKEREKDEEILKIIEDMARELEELNP.

The protein belongs to the UPF0122 family.

Might take part in the signal recognition particle (SRP) pathway. This is inferred from the conservation of its genetic proximity to ftsY/ffh. May be a regulatory protein. The polypeptide is UPF0122 protein TTE1463 (Caldanaerobacter subterraneus subsp. tengcongensis (strain DSM 15242 / JCM 11007 / NBRC 100824 / MB4) (Thermoanaerobacter tengcongensis)).